A 129-amino-acid polypeptide reads, in one-letter code: MANLNQIQKEVSEILSDQKSMKADIKAILELLGSQNPIKESLETVAAKIVNDLTKLINDCPCNKEILEALGNQPKEQLIGQPKEKGKGLNLGKYSYPNYGVGNEELGSSGNPKALTWPFKAPAGWPNQY.

2 coiled-coil regions span residues 1-31 (MANLNQIQKEVSEILSDQKSMKADIKAILEL) and 38-59 (IKESLETVAAKIVNDLTKLIND). The tract at residues 122–129 (PAGWPNQY) is capsid binding.

It belongs to the caulimovirus ORF III family. In terms of assembly, homotetramer, through coiled-coil domain. Homotrimer when interacts with icosehadral capsid. Interacts with capsid protein, and with Movement protein.

The protein localises to the virion. It localises to the host cell junction. It is found in the host plasmodesma. Its function is as follows. Plays a role in virus cell-to-cell and plant-to-plant transmission. Interacts with virion icosahedral capsid and movement protein, thereby facilitating virion cell-to-cell transmission through plasmodesmata opened by viral movement protein. Also interacts with aphid transmission factor, attaching the virion to aphid stylet when the animal feeds on an virus infected plant. Aphid saliva may later detach the virion, inducing release of infectious particles when the animal feeds on a new plant. The chain is Virion-associated protein from Cauliflower mosaic virus (strain D/H) (CaMV).